A 608-amino-acid chain; its full sequence is ATP-binding protein Uup (608 aa).

ABC transporter domains are found at residues 7 to 217 (APVL…AADA) and 285 to 512 (VEAK…FAPV). ATP contacts are provided by residues 42–49 (GRNGAGKS) and 317–324 (GPNGAGKT). The tract at residues 522 to 608 (AAPAAPKKSA…LEEKKENLAG (87 aa)) is C-terminal domain (CTD), binds DNA.

The protein belongs to the ABC transporter superfamily. ABCF family. Uup subfamily.

It localises to the cytoplasm. The catalysed reaction is ATP + H2O = ADP + phosphate + H(+). Its function is as follows. Probably plays a role in ribosome assembly or function. May be involved in resolution of branched DNA intermediates that result from template switching in postreplication gaps. Binds DNA and has ATPase activity. One of a cluster of genes involved in attachment of the holdfast to the cell. The holdfast is a structure that allows the bacteria to firmly adhere to surfaces. The sequence is that of ATP-binding protein Uup from Caulobacter vibrioides (strain ATCC 19089 / CIP 103742 / CB 15) (Caulobacter crescentus).